We begin with the raw amino-acid sequence, 520 residues long: Probable protein phosphatase 2C 39 (520 aa).

A PPM-type phosphatase domain is found at F160 to L507. Positions 195, 196, 435, and 498 each coordinate Mn(2+).

Belongs to the PP2C family. It depends on Mg(2+) as a cofactor. The cofactor is Mn(2+).

The enzyme catalyses O-phospho-L-seryl-[protein] + H2O = L-seryl-[protein] + phosphate. It carries out the reaction O-phospho-L-threonyl-[protein] + H2O = L-threonyl-[protein] + phosphate. This chain is Probable protein phosphatase 2C 39, found in Oryza sativa subsp. japonica (Rice).